The primary structure comprises 152 residues: Deoxyuridine 5'-triphosphate nucleotidohydrolase (152 aa).

Substrate-binding positions include arginine 72–glycine 74, asparagine 85, threonine 89–aspartate 91, and lysine 99.

It belongs to the dUTPase family. Mg(2+) is required as a cofactor.

The catalysed reaction is dUTP + H2O = dUMP + diphosphate + H(+). Its pathway is pyrimidine metabolism; dUMP biosynthesis; dUMP from dCTP (dUTP route): step 2/2. In terms of biological role, this enzyme is involved in nucleotide metabolism: it produces dUMP, the immediate precursor of thymidine nucleotides and it decreases the intracellular concentration of dUTP so that uracil cannot be incorporated into DNA. The chain is Deoxyuridine 5'-triphosphate nucleotidohydrolase from Bradyrhizobium diazoefficiens (strain JCM 10833 / BCRC 13528 / IAM 13628 / NBRC 14792 / USDA 110).